A 269-amino-acid chain; its full sequence is Phosphate import ATP-binding protein PstB (269 aa).

The region spanning 14–253 (LSLENVSISY…EFNSTKKIFN (240 aa)) is the ABC transporter domain. An ATP-binding site is contributed by 46–53 (GPSGCGKS).

It belongs to the ABC transporter superfamily. Phosphate importer (TC 3.A.1.7) family. In terms of assembly, the complex is composed of two ATP-binding proteins (PstB), two transmembrane proteins (PstC and PstA) and a solute-binding protein (PstS).

The protein localises to the cell inner membrane. It carries out the reaction phosphate(out) + ATP + H2O = ADP + 2 phosphate(in) + H(+). Part of the ABC transporter complex PstSACB involved in phosphate import. Responsible for energy coupling to the transport system. This chain is Phosphate import ATP-binding protein PstB, found in Prochlorococcus marinus (strain MIT 9312).